A 177-amino-acid chain; its full sequence is Protein GrpE (177 aa).

Basic and acidic residues-rich tracts occupy residues 1–19 (MAKHKHEEHPEDVEVKETV) and 29–41 (SPEKSELELANER). The tract at residues 1 to 41 (MAKHKHEEHPEDVEVKETVETAEQAESASPEKSELELANER) is disordered.

The protein belongs to the GrpE family. In terms of assembly, homodimer.

The protein resides in the cytoplasm. Functionally, participates actively in the response to hyperosmotic and heat shock by preventing the aggregation of stress-denatured proteins, in association with DnaK and GrpE. It is the nucleotide exchange factor for DnaK and may function as a thermosensor. Unfolded proteins bind initially to DnaJ; upon interaction with the DnaJ-bound protein, DnaK hydrolyzes its bound ATP, resulting in the formation of a stable complex. GrpE releases ADP from DnaK; ATP binding to DnaK triggers the release of the substrate protein, thus completing the reaction cycle. Several rounds of ATP-dependent interactions between DnaJ, DnaK and GrpE are required for fully efficient folding. The polypeptide is Protein GrpE (Streptococcus gordonii (strain Challis / ATCC 35105 / BCRC 15272 / CH1 / DL1 / V288)).